The primary structure comprises 641 residues: MPSSKARSSPSVDRRERLTLAKLASYDDVATDALVDCAYFWTKTRKNRTKYIPVRGLAEDTVAHILLHDVIVAKDVSAAERKILDLIGMKRYLAKLPNDREKDWFRKHLRKYIQMYLPDCPFEVTTTNRYTITEHEAAICARKFIPQGQEIKYLSGTLVPMTKEEERDLDLKRKDFSIVMSSRRKTPSFFLGPARFANHDCSANGRLVTRGSEGMQVVATRDIYIGEEITVSYGEDYFGIDNCECLCLSCERVPRNGWSQNLAPGPQSKPSTPEPKASEDHLTPRKRKAQSDIDSDSSPSSTPRKRGKFTPRGSKLRSQLSLTEDIAISIESEPRVPSSNLALSAQEAGDSGKSSSAGDNVESSGTDSESLTSITPQESQRSSASTAATSVFDEAVSLNTRPTKSAVTTAAPAESSIAAEAPLSTTIPETDIKLEVEPSCEPTTTVTAQLDTTVRADSCVSDISSSTKLEDGSEALEHVKKPRKPRTKRVYLTIEPESKLNRVPGDYTKTPKLLAHSYDRWVDCHTCNAWFVQQNSYLTRRECPRCERHSMLYGFRWPKTEKEGPNDDEERVMDHRTIHRFLYPEEEALVSRRGRGVSFGLTPTPELSDMRSETPDSEALDERGNTRVTRRRTRAIRVTTV.

Positions 120 to 234 (CPFEVTTTNR…IGEEITVSYG (115 aa)) constitute an SET domain. Disordered regions lie at residues 261 to 388 (NLAP…STAA) and 596 to 628 (GVSF…NTRV). A compositionally biased stretch (low complexity) spans 348–359 (AGDSGKSSSAGD). Residues 361–381 (VESSGTDSESLTSITPQESQR) show a composition bias toward polar residues. Over residues 608–625 (SDMRSETPDSEALDERGN) the composition is skewed to basic and acidic residues.

Belongs to the class V-like SAM-binding methyltransferase superfamily. Histone-lysine methyltransferase family. Suvar4-20 subfamily.

It is found in the nucleus. It localises to the chromosome. The catalysed reaction is L-lysyl(20)-[histone H4] + 3 S-adenosyl-L-methionine = N(6),N(6),N(6)-trimethyl-L-lysyl(20)-[histone H4] + 3 S-adenosyl-L-homocysteine + 3 H(+). In terms of biological role, histone methyltransferase that trimethylates 'Lys-20' of histone H4 to form H4K20me3. The sequence is that of Histone-lysine N-methyltransferase set9 (set9) from Emericella nidulans (strain FGSC A4 / ATCC 38163 / CBS 112.46 / NRRL 194 / M139) (Aspergillus nidulans).